Reading from the N-terminus, the 340-residue chain is Ketol-acid reductoisomerase (NADP(+)) (340 aa).

Residues 3-183 form the KARI N-terminal Rossmann domain; that stretch reads VSIYYDKDCD…GGGRTGIIET (181 aa). Residues 26–29, lysine 49, serine 54, and 84–87 each bind NADP(+); these read FGSQ and DEIQ. Histidine 109 is an active-site residue. Glycine 135 is an NADP(+) binding site. Residues 184–329 form the KARI C-terminal knotted domain; it reads TFKAETETDL…RELRAMMPWI (146 aa). Aspartate 192, glutamate 196, glutamate 228, and glutamate 232 together coordinate Mg(2+). Serine 253 is a substrate binding site.

It belongs to the ketol-acid reductoisomerase family. Mg(2+) serves as cofactor.

It catalyses the reaction (2R)-2,3-dihydroxy-3-methylbutanoate + NADP(+) = (2S)-2-acetolactate + NADPH + H(+). The enzyme catalyses (2R,3R)-2,3-dihydroxy-3-methylpentanoate + NADP(+) = (S)-2-ethyl-2-hydroxy-3-oxobutanoate + NADPH + H(+). It functions in the pathway amino-acid biosynthesis; L-isoleucine biosynthesis; L-isoleucine from 2-oxobutanoate: step 2/4. The protein operates within amino-acid biosynthesis; L-valine biosynthesis; L-valine from pyruvate: step 2/4. In terms of biological role, involved in the biosynthesis of branched-chain amino acids (BCAA). Catalyzes an alkyl-migration followed by a ketol-acid reduction of (S)-2-acetolactate (S2AL) to yield (R)-2,3-dihydroxy-isovalerate. In the isomerase reaction, S2AL is rearranged via a Mg-dependent methyl migration to produce 3-hydroxy-3-methyl-2-ketobutyrate (HMKB). In the reductase reaction, this 2-ketoacid undergoes a metal-dependent reduction by NADPH to yield (R)-2,3-dihydroxy-isovalerate. This Campylobacter lari (strain RM2100 / D67 / ATCC BAA-1060) protein is Ketol-acid reductoisomerase (NADP(+)).